A 172-amino-acid polypeptide reads, in one-letter code: Adenine phosphoribosyltransferase (172 aa).

Belongs to the purine/pyrimidine phosphoribosyltransferase family. As to quaternary structure, homodimer.

Its subcellular location is the cytoplasm. The catalysed reaction is AMP + diphosphate = 5-phospho-alpha-D-ribose 1-diphosphate + adenine. It participates in purine metabolism; AMP biosynthesis via salvage pathway; AMP from adenine: step 1/1. Functionally, catalyzes a salvage reaction resulting in the formation of AMP, that is energically less costly than de novo synthesis. The chain is Adenine phosphoribosyltransferase from Nostoc punctiforme (strain ATCC 29133 / PCC 73102).